The chain runs to 197 residues: Nucleoid occlusion factor SlmA (197 aa).

An HTH tetR-type domain is found at 7–67; it reads INRREHILQC…GLIEFIEESL (61 aa). The segment at residues 30–49 is a DNA-binding region (H-T-H motif); the sequence is TTAKLAAEVGVSEAALYRHF. The stretch at 109–136 forms a coiled coil; that stretch reads DALLGENERLRSRISQLFSKIETHLKQI.

The protein belongs to the nucleoid occlusion factor SlmA family. In terms of assembly, homodimer. Interacts with FtsZ.

The protein resides in the cytoplasm. The protein localises to the nucleoid. In terms of biological role, required for nucleoid occlusion (NO) phenomenon, which prevents Z-ring formation and cell division over the nucleoid. Acts as a DNA-associated cell division inhibitor that binds simultaneously chromosomal DNA and FtsZ, and disrupts the assembly of FtsZ polymers. SlmA-DNA-binding sequences (SBS) are dispersed on non-Ter regions of the chromosome, preventing FtsZ polymerization at these regions. The protein is Nucleoid occlusion factor SlmA of Shewanella pealeana (strain ATCC 700345 / ANG-SQ1).